Consider the following 305-residue polypeptide: Peroxisome assembly protein 26 (305 aa).

The segment at 1–20 (MKSDSSTSAAPLRGLGGPLR) is disordered. Residues 1-246 (MKSDSSTSAA…RQLWDSAVSH (246 aa)) are Cytoplasmic-facing. Residues 247 to 267 (FFSLPFKKSLLAALILCLLVV) form a helical; Signal-anchor for type II membrane protein membrane-spanning segment. At 268–305 (RFDPASPSSLHFLYKLAQLFRWIRKAAFSRLYQLRIRD) the chain is on the peroxisomal matrix side.

The protein belongs to the peroxin-26 family. In terms of assembly, interacts (via its cytoplasmic domain) with PEX6; interaction is direct and is ATP-dependent. Interacts with PEX1; interaction is indirect and is mediated via interaction with PEX6. In terms of tissue distribution, widely expressed. Highly expressed in kidney, liver, brain and skeletal muscles. Expressed at intermediate level in pancreas, placenta and heart. Weakly expressed in lung.

It is found in the peroxisome membrane. In terms of biological role, peroxisomal docking factor that anchors PEX1 and PEX6 to peroxisome membranes. PEX26 is therefore required for the formation of the PEX1-PEX6 AAA ATPase complex, a complex that mediates the extraction of the PEX5 receptor from peroxisomal membrane. This Homo sapiens (Human) protein is Peroxisome assembly protein 26.